Consider the following 143-residue polypeptide: Large ribosomal subunit protein uL16 (143 aa).

Positions 1-26 (MSMALLPRRVKYRKSQRGSRKGNATR) are disordered. Over residues 8–20 (RRVKYRKSQRGSR) the composition is skewed to basic residues.

It belongs to the universal ribosomal protein uL16 family. Part of the 50S ribosomal subunit.

Functionally, binds 23S rRNA and is also seen to make contacts with the A and possibly P site tRNAs. This chain is Large ribosomal subunit protein uL16, found in Methylacidiphilum infernorum (isolate V4) (Methylokorus infernorum (strain V4)).